The primary structure comprises 202 residues: Venom allergen 5 (202 aa).

4 disulfides stabilise this stretch: C4-C16, C8-C101, C26-C94, and C168-C185. Residues 46 to 187 enclose the SCP domain; it reads KQHNEFRQKV…WHRHYLVCNY (142 aa).

The protein belongs to the CRISP family. Venom allergen 5-like subfamily. Expressed by the venom gland.

The protein resides in the secreted. The sequence is that of Venom allergen 5 from Vespa mandarinia (Asian giant hornet).